Here is a 452-residue protein sequence, read N- to C-terminus: Retrograde protein of 51 kDa (452 aa).

Residues 1-13 are compositionally biased toward basic and acidic residues; it reads MQKGAKIEDEGRQ. Positions 1-50 are disordered; the sequence is MQKGAKIEDEGRQSRIQSRNFIIQRSDPRTRGSSVYSSRSSSYNVRSSIS. Residues 1-75 form a head region; it reads MQKGAKIEDE…KGNREKEKRE (75 aa). Positions 14 to 23 are enriched in polar residues; that stretch reads SRIQSRNFII. A compositionally biased stretch (low complexity) spans 33–50; it reads SSVYSSRSSSYNVRSSIS. One can recognise an IF rod domain in the interval 72 to 424; that stretch reads EKREMQNLNE…KLLEGEESRV (353 aa). Residues 76–111 are coil 1A; the sequence is MQNLNERLASYIEKVHFLDAQVKKLEAENEALRNRK. The tract at residues 112–121 is linker 1; that stretch reads VEDLQPIRDA. Positions 122-259 are coil 1B; the sequence is YENELRQARK…DLLDQLELLK (138 aa). Serine 156 carries the post-translational modification Sulfoserine. The tract at residues 260–278 is linker 12; the sequence is PEPIQIKGMDYADFWKSEL. Positions 279–424 are coil 2; it reads AKCVREINLA…KLLEGEESRV (146 aa). Residues 425 to 452 form a tail region; sequence GLRTLVEQAIGTQSKGSASLKDAIQSSS.

The protein belongs to the intermediate filament family.

This chain is Retrograde protein of 51 kDa (RGP51), found in Lymnaea stagnalis (Great pond snail).